Consider the following 120-residue polypeptide: Large ribosomal subunit protein uL18 (120 aa).

This sequence belongs to the universal ribosomal protein uL18 family. Part of the 50S ribosomal subunit; part of the 5S rRNA/L5/L18/L25 subcomplex. Contacts the 5S and 23S rRNAs.

Its function is as follows. This is one of the proteins that bind and probably mediate the attachment of the 5S RNA into the large ribosomal subunit, where it forms part of the central protuberance. The polypeptide is Large ribosomal subunit protein uL18 (Methylorubrum extorquens (strain CM4 / NCIMB 13688) (Methylobacterium extorquens)).